The sequence spans 328 residues: Malate dehydrogenase (328 aa).

Gly-12–Gly-18 is a binding site for NAD(+). Substrate contacts are provided by Arg-95 and Arg-101. NAD(+)-binding positions include Asn-108, Gln-115, and Val-132–Asn-134. Residues Asn-134 and Arg-165 each coordinate substrate. Residue His-190 is the Proton acceptor of the active site.

This sequence belongs to the LDH/MDH superfamily. MDH type 2 family.

It catalyses the reaction (S)-malate + NAD(+) = oxaloacetate + NADH + H(+). In terms of biological role, catalyzes the reversible oxidation of malate to oxaloacetate. The sequence is that of Malate dehydrogenase from Variovorax paradoxus (strain S110).